The primary structure comprises 508 residues: Methionine--tRNA ligase (508 aa).

Residues 12–22 (YYVNDIPHIGH) carry the 'HIGH' region motif. The short motif at 295–299 (KISKS) is the 'KMSKS' region element. Lysine 298 is an ATP binding site.

The protein belongs to the class-I aminoacyl-tRNA synthetase family. MetG type 2B subfamily. In terms of assembly, monomer.

The protein resides in the cytoplasm. The enzyme catalyses tRNA(Met) + L-methionine + ATP = L-methionyl-tRNA(Met) + AMP + diphosphate. Functionally, is required not only for elongation of protein synthesis but also for the initiation of all mRNA translation through initiator tRNA(fMet) aminoacylation. This Rickettsia conorii (strain ATCC VR-613 / Malish 7) protein is Methionine--tRNA ligase.